Consider the following 98-residue polypeptide: NADH-ubiquinone oxidoreductase chain 4L (98 aa).

The next 3 helical transmembrane spans lie at 1-21 (MSLV…GLLM), 29-49 (SLLC…LTIL), and 61-81 (IILL…LVMV).

This sequence belongs to the complex I subunit 4L family. In terms of assembly, core subunit of respiratory chain NADH dehydrogenase (Complex I) which is composed of 45 different subunits.

Its subcellular location is the mitochondrion inner membrane. It catalyses the reaction a ubiquinone + NADH + 5 H(+)(in) = a ubiquinol + NAD(+) + 4 H(+)(out). Its function is as follows. Core subunit of the mitochondrial membrane respiratory chain NADH dehydrogenase (Complex I) which catalyzes electron transfer from NADH through the respiratory chain, using ubiquinone as an electron acceptor. Part of the enzyme membrane arm which is embedded in the lipid bilayer and involved in proton translocation. In Muntiacus feae (Fea's muntjac), this protein is NADH-ubiquinone oxidoreductase chain 4L (MT-ND4L).